Consider the following 81-residue polypeptide: GAMMA-ctenitoxin-Pn1a (81 aa).

Residues 1–16 (MKVAIVFLSLLVLAFA) form the signal peptide. The propeptide occupies 17–34 (SESIEENREEFPVEESAR). Disulfide bonds link cysteine 35–cysteine 49, cysteine 42–cysteine 55, cysteine 46–cysteine 81, cysteine 48–cysteine 65, and cysteine 57–cysteine 63.

This sequence belongs to the neurotoxin 03 (Tx2) family. 05 subfamily. As to expression, expressed by the venom gland.

Its subcellular location is the secreted. Its function is as follows. This insecticidal neurotoxin targets two types of channels/receptors. It reversibly inhibits the N-methyl-D-aspartate (NMDA)-subtype of ionotropic glutamate receptor (GRIN). It inhibits glutamate uptake from rat brain synaptosomes, and blocks GRIN in hippocampal slices. It also acts on sodium channels of both insects and mammals. On sodium channel insects, it strongly slows down channel inactivation (EC(50)=212.5 nM) and causes an increase (105%) in peak amplitude (at 1 uM) of B.germanica sodium channel (Nav), whereas it inhibits all mammalien sodium channels tested with the following order of potency: Nav1.3/SCN3A (IC(50)=1.5 uM) &gt; Nav1.6/SCN8A &gt; Nav1.5/SCN5A &gt; Nav1.4/SCN4A &gt;= Nav1.2/SCN2A. In vivo, it is highly toxic to house fly (Musca domestica), cockroach (Periplaneta americana), and cricket (Acheta domesticus). In different rat pain models (induced by PGE2, carrageenan or glutamate), it shows antinociceptive effect that may be related to an inhibitory activity on the glutamatergic system. The sequence is that of GAMMA-ctenitoxin-Pn1a from Phoneutria nigriventer (Brazilian armed spider).